Here is a 176-residue protein sequence, read N- to C-terminus: ATP synthase subunit delta (176 aa).

Belongs to the ATPase delta chain family. In terms of assembly, F-type ATPases have 2 components, F(1) - the catalytic core - and F(0) - the membrane proton channel. F(1) has five subunits: alpha(3), beta(3), gamma(1), delta(1), epsilon(1). F(0) has three main subunits: a(1), b(2) and c(10-14). The alpha and beta chains form an alternating ring which encloses part of the gamma chain. F(1) is attached to F(0) by a central stalk formed by the gamma and epsilon chains, while a peripheral stalk is formed by the delta and b chains.

It localises to the cell membrane. Its function is as follows. F(1)F(0) ATP synthase produces ATP from ADP in the presence of a proton or sodium gradient. F-type ATPases consist of two structural domains, F(1) containing the extramembraneous catalytic core and F(0) containing the membrane proton channel, linked together by a central stalk and a peripheral stalk. During catalysis, ATP synthesis in the catalytic domain of F(1) is coupled via a rotary mechanism of the central stalk subunits to proton translocation. This protein is part of the stalk that links CF(0) to CF(1). It either transmits conformational changes from CF(0) to CF(1) or is implicated in proton conduction. The sequence is that of ATP synthase subunit delta from Wigglesworthia glossinidia brevipalpis.